A 142-amino-acid chain; its full sequence is Protein archease (142 aa).

The Ca(2+) site is built by Asp-12 and Asp-141.

Belongs to the archease family.

In terms of biological role, activates the tRNA-splicing ligase complex by facilitating the enzymatic turnover of catalytic subunit RtcB. Acts by promoting the guanylylation of RtcB, a key intermediate step in tRNA ligation. Can also alter the NTP specificity of RtcB such that ATP, dGTP or ITP is used efficiently. The sequence is that of Protein archease from Thermococcus kodakarensis (strain ATCC BAA-918 / JCM 12380 / KOD1) (Pyrococcus kodakaraensis (strain KOD1)).